Here is a 1041-residue protein sequence, read N- to C-terminus: Nuclear migration protein unc-83 (1041 aa).

3 disordered regions span residues 258 to 283 (VGHL…TETV), 453 to 498 (IHGQ…LEDD), and 613 to 646 (IRNR…DSIS). Positions 456 to 465 (QKKPLRRASR) are enriched in basic residues. A compositionally biased stretch (basic and acidic residues) spans 613 to 626 (IRNRDSDTAPEHSD). 2 coiled-coil regions span residues 785–816 (RSKE…DLLA) and 931–951 (KAEL…FNDM). One can recognise a KASH domain in the interval 986 to 1041 (TENEPLTIAEAISSSRLIKFTFALSLLAALAAIFYYHVFGKPFGPHVTYVNGPPPV). A helical; Anchor for type IV membrane protein transmembrane segment spans residues 1005 to 1024 (FTFALSLLAALAAIFYYHVF).

In terms of assembly, component of the unc-83-unc-84 LINC complex which contains at least unc-83 and unc-84. Within the unc-83-unc-84 LINC complex interacts with unc-84 (via C-terminus); the interaction is probably required to recruit unc-83 to the nuclear envelope where it then recruits dynein and kinesin-1 complexes to regulate nuclear migration. Interacts with bicd-1 and dlc-1. Interacts with nud-2 (via C-terminus); the interaction is direct, and is required for recruitment of nud-2 to the nuclear envelope. Interacts with klc-2; the interaction is direct. In terms of tissue distribution, predominantly expressed in migratory nuclei. Expressed in a variety of cell-types, including cells around the pharynx and in the uterus.

The protein localises to the nucleus membrane. The protein resides in the nucleus outer membrane. Functionally, cargo-specific adapter that is involved in nuclear migration during development and thereafter. Component of the unc-83-unc-84 LINC (LInker of Nucleoskeleton and Cytoskeleton) complex where it interacts with unc-84 to form a bridge connecting the nuclear envelope to the cytoskeleton which allows for nuclear transport along microtubules. Within the complex, connects the nuclear envelope to the microtubule cytoskeleton through the kinesin-1 light chain protein klc-2 (most likely within the Kinesin 1 motor complex) to regulate nuclear migrations. Moreover, within the complex, also recruits the large microtubule-associated bicd-1-dlc-1-egal-1 and lis-1-nud-2 complexes to the nuclear envelope to regulate both the bidirectional migration of nuclei and the extent of nuclear migrations. Not required for centrosome attachment to the nucleus. This is Nuclear migration protein unc-83 from Caenorhabditis elegans.